A 550-amino-acid chain; its full sequence is Glucose-6-phosphate isomerase (550 aa).

D-glucose 6-phosphate is bound by residues 163–164, 214–219, Gln-358, Glu-362, His-393, and Lys-515; these read GS and SKTFTT. Catalysis depends on Glu-362, which acts as the Proton donor. Residues His-393 and Lys-515 contribute to the active site.

Belongs to the GPI family. Homodimer.

The protein resides in the cytoplasm. The enzyme catalyses alpha-D-glucose 6-phosphate = beta-D-fructose 6-phosphate. The protein operates within carbohydrate degradation; glycolysis; D-glyceraldehyde 3-phosphate and glycerone phosphate from D-glucose: step 2/4. In the cytoplasm, catalyzes the conversion of glucose-6-phosphate to fructose-6-phosphate, the second step in glycolysis, and the reverse reaction during gluconeogenesis. In Candida albicans (strain SC5314 / ATCC MYA-2876) (Yeast), this protein is Glucose-6-phosphate isomerase (PGI1).